The sequence spans 428 residues: Serine--tRNA ligase (428 aa).

Residue 231 to 233 (TAE) participates in L-serine binding. Residue 262–264 (RSE) coordinates ATP. Glu-285 is a binding site for L-serine. 349-352 (EISS) contributes to the ATP binding site. L-serine is bound at residue Ser-385.

Belongs to the class-II aminoacyl-tRNA synthetase family. Type-1 seryl-tRNA synthetase subfamily. Homodimer. The tRNA molecule binds across the dimer.

It localises to the cytoplasm. The catalysed reaction is tRNA(Ser) + L-serine + ATP = L-seryl-tRNA(Ser) + AMP + diphosphate + H(+). The enzyme catalyses tRNA(Sec) + L-serine + ATP = L-seryl-tRNA(Sec) + AMP + diphosphate + H(+). It functions in the pathway aminoacyl-tRNA biosynthesis; selenocysteinyl-tRNA(Sec) biosynthesis; L-seryl-tRNA(Sec) from L-serine and tRNA(Sec): step 1/1. In terms of biological role, catalyzes the attachment of serine to tRNA(Ser). Is also able to aminoacylate tRNA(Sec) with serine, to form the misacylated tRNA L-seryl-tRNA(Sec), which will be further converted into selenocysteinyl-tRNA(Sec). This chain is Serine--tRNA ligase, found in Staphylococcus aureus (strain MW2).